Consider the following 118-residue polypeptide: T cell receptor gamma variable 8 (118 aa).

Residues 1 to 17 (MLLALALLLAFLPPASQ) form the signal peptide. An Ig-like domain is found at 18 to 118 (KSSNLEGRTK…GVYYCATWDR (101 aa)). Cys-41 and Cys-113 are disulfide-bonded.

In terms of assembly, gamma-delta TR is a heterodimer composed of a gamma and delta chain; disulfide-linked. The gamma-delta TR is associated with the transmembrane signaling CD3 coreceptor proteins following the stoichiometry: a single gamma-delta TR heterodimer associates with one CD3D-CD3E heterodimer, one CD3G-CD3E heterodimer and one CD247 homodimer forming a stable octameric structure. Upon activation, gamma-delta TR complex associates with FCER1G to initiate intracellular signaling.

It localises to the cell membrane. V region of the variable domain of T cell receptor (TR) gamma chain that participates in the antigen recognition. Gamma-delta TRs recognize a variety of self and foreign non-peptide antigens frequently expressed at the epithelial boundaries between the host and external environment, including endogenous lipids presented by MH-like protein CD1D and phosphoantigens presented by butyrophilin-like molecule BTN3A1. Upon antigen recognition induces rapid, innate-like immune responses involved in pathogen clearance and tissue repair. Binding of gamma-delta TR complex to antigen triggers phosphorylation of immunoreceptor tyrosine-based activation motifs (ITAMs) in the CD3 chains by the LCK and FYN kinases, allowing the recruitment, phosphorylation, and activation of ZAP70 that facilitates phosphorylation of the scaffolding proteins LCP2 and LAT. This lead to the formation of a supramolecular signalosome that recruits the phospholipase PLCG1, resulting in calcium mobilization and ERK activation, ultimately leading to T cell expansion and differentiation into effector cells. Gamma-delta TRs are produced through somatic rearrangement of a limited repertoire of variable (V), diversity (D), and joining (J) genes. The potential diversity of gamma-delta TRs is conferred by the unique ability to rearrange (D) genes in tandem and to utilize all three reading frames. The combinatorial diversity is considerably increased by the sequence exonuclease trimming and random nucleotide (N) region additions which occur during the V-(D)-J rearrangements. The sequence is that of T cell receptor gamma variable 8 from Homo sapiens (Human).